We begin with the raw amino-acid sequence, 265 residues long: Protein N-terminal and lysine N-methyltransferase EFM7 (265 aa).

S-adenosyl-L-methionine contacts are provided by residues tryptophan 55, 81-83 (GAA), aspartate 103, tryptophan 141, and alanine 169.

Belongs to the class I-like SAM-binding methyltransferase superfamily. EFM7 family.

The protein localises to the cytoplasm. Functionally, S-adenosyl-L-methionine-dependent protein methyltransferase that trimethylates the N-terminal glycine 'Gly-2' of elongation factor 1-alpha, before also catalyzing the mono- and dimethylation of 'Lys-3'. In Gibberella zeae (strain ATCC MYA-4620 / CBS 123657 / FGSC 9075 / NRRL 31084 / PH-1) (Wheat head blight fungus), this protein is Protein N-terminal and lysine N-methyltransferase EFM7.